The chain runs to 251 residues: Octanoyltransferase (251 aa).

Residues 56-241 (AETPDEIWIV…NLDGASAAAD (186 aa)) form the BPL/LPL catalytic domain. Substrate contacts are provided by residues 96–103 (RGGQITYH), 168–170 (ALG), and 181–183 (GLS). C199 (acyl-thioester intermediate) is an active-site residue.

The protein belongs to the LipB family.

It is found in the cytoplasm. The catalysed reaction is octanoyl-[ACP] + L-lysyl-[protein] = N(6)-octanoyl-L-lysyl-[protein] + holo-[ACP] + H(+). It functions in the pathway protein modification; protein lipoylation via endogenous pathway; protein N(6)-(lipoyl)lysine from octanoyl-[acyl-carrier-protein]: step 1/2. Functionally, catalyzes the transfer of endogenously produced octanoic acid from octanoyl-acyl-carrier-protein onto the lipoyl domains of lipoate-dependent enzymes. Lipoyl-ACP can also act as a substrate although octanoyl-ACP is likely to be the physiological substrate. This chain is Octanoyltransferase, found in Burkholderia vietnamiensis (strain G4 / LMG 22486) (Burkholderia cepacia (strain R1808)).